A 404-amino-acid polypeptide reads, in one-letter code: Na(+)/H(+) antiporter NhaA 2 (404 aa).

Helical transmembrane passes span 24–44 (GIIL…SFSG), 67–87 (VLHW…GMEI), 103–123 (ILPI…YALF), 132–152 (GWGI…SLVA), 161–181 (VFLT…IAIF), 184–204 (SQIS…LILA), 216–236 (IILG…ATIA), 266–286 (TPWS…GIII), 303–323 (IIFG…FILI), 339–359 (LYGA…VSSL), and 372–392 (MCIM…FKFI).

It belongs to the NhaA Na(+)/H(+) (TC 2.A.33) antiporter family.

Its subcellular location is the cell membrane. It carries out the reaction Na(+)(in) + 2 H(+)(out) = Na(+)(out) + 2 H(+)(in). Functionally, na(+)/H(+) antiporter that extrudes sodium in exchange for external protons. This chain is Na(+)/H(+) antiporter NhaA 2, found in Clostridium beijerinckii (strain ATCC 51743 / NCIMB 8052) (Clostridium acetobutylicum).